The chain runs to 187 residues: MSINPLASKIASPYARALYDFSVEQNIMHQVTADFQNLDVFLAEVPTLMEYLGNPIVTATQKEALLTKTLKSQLNAETFKFLMVLVKRDRINLLPTIITTYLELVYKTASVKMIEVSTAFPFTTLQKLNLIKKLKELTNAREIRLVVTVDSSLIGGFLIKTNSKVIDFTIKNQLENLAKHLDGVLEI.

Belongs to the ATPase delta chain family. As to quaternary structure, F-type ATPases have 2 components, F(1) - the catalytic core - and F(0) - the membrane proton channel. F(1) has five subunits: alpha(3), beta(3), gamma(1), delta(1), epsilon(1). CF(0) has four main subunits: a(1), b(1), b'(1) and c(10-14). The alpha and beta chains form an alternating ring which encloses part of the gamma chain. F(1) is attached to F(0) by a central stalk formed by the gamma and epsilon chains, while a peripheral stalk is formed by the delta, b and b' chains.

It is found in the plastid. It localises to the chloroplast thylakoid membrane. In terms of biological role, f(1)F(0) ATP synthase produces ATP from ADP in the presence of a proton or sodium gradient. F-type ATPases consist of two structural domains, F(1) containing the extramembraneous catalytic core and F(0) containing the membrane proton channel, linked together by a central stalk and a peripheral stalk. During catalysis, ATP synthesis in the catalytic domain of F(1) is coupled via a rotary mechanism of the central stalk subunits to proton translocation. This protein is part of the stalk that links CF(0) to CF(1). It either transmits conformational changes from CF(0) to CF(1) or is implicated in proton conduction. The chain is ATP synthase subunit delta, chloroplastic from Thalassiosira pseudonana (Marine diatom).